A 167-amino-acid chain; its full sequence is Homeobox protein EgHBX3 (167 aa).

The segment at residues serine 80–phenylalanine 139 is a DNA-binding region (homeobox).

It belongs to the NK-2 homeobox family.

The protein resides in the nucleus. This chain is Homeobox protein EgHBX3 (HBX3), found in Echinococcus granulosus (Hydatid tapeworm).